A 419-amino-acid chain; its full sequence is MTTQLEQAWELAKQRFAAVGIDVEEALRQLDRLPVSMHCWQGDDVSGFENPEGSLTGGIQATGNYPGKARNASELRADLEQAMRLIPGPKRLNLHAIYLESDTPVSRDQIKPEHFKNWVEWAKANQLGLDFNPSCFSHPLSADGFTLSHADDSIRQFWIDHCKASRRVSAYFGEQLGTPSVMNIWIPDGMKDITVDRLAPRQRLLAALDEVISEKLDPAHHIDAVESKLFGIGAESYTVGSNEFYMGYATSRQTALCLDAGHFHPTEVISDKISAAMLYVPQLLLHVSRPVRWDSDHVVLLDDETQAIASEIVRHDLFDRVHIGLDFFDASINRIAAWIIGTRNMKKALLRALLEPTAELRKLEAAGDYTARLALLEEQKSLPWQAVWEMYCQRHDTPAGSEWLESVRAYEKETLSRRG.

Mn(2+) contacts are provided by His262, Asp294, and Asp296.

Belongs to the rhamnose isomerase family. In terms of assembly, homotetramer. The cofactor is Mn(2+).

The protein localises to the cytoplasm. It carries out the reaction L-rhamnopyranose = L-rhamnulose. Its pathway is carbohydrate degradation; L-rhamnose degradation; glycerone phosphate from L-rhamnose: step 1/3. Its function is as follows. Catalyzes the interconversion of L-rhamnose and L-rhamnulose. The chain is L-rhamnose isomerase from Escherichia coli O157:H7.